Consider the following 191-residue polypeptide: MKLPESFYETIFLFLESGLILGSLGVILLTNIVYSALFLGFVFVCISLLYLLLNADFVAAAQILIYVGAVNVLIIFAVMLINKKQYSNFFVYWTIGDGITLTLCTSIFLLLNNFISNTSWSKIFLMTKPNLVVKDIILINTVRHIGSELLTEFLLPFELMSIILLVALIGAITLARREKKIELEKNDFFNF.

Helical transmembrane passes span 10–30 (TIFL…ILLT), 32–52 (IVYS…LYLL), 61–81 (AQIL…VMLI), 89–109 (FFVY…SIFL), and 153–173 (FLLP…GAIT).

The protein belongs to the complex I subunit 6 family. In terms of assembly, NDH is composed of at least 16 different subunits, 5 of which are encoded in the nucleus.

It is found in the plastid. It localises to the chloroplast thylakoid membrane. The catalysed reaction is a plastoquinone + NADH + (n+1) H(+)(in) = a plastoquinol + NAD(+) + n H(+)(out). The enzyme catalyses a plastoquinone + NADPH + (n+1) H(+)(in) = a plastoquinol + NADP(+) + n H(+)(out). Functionally, NDH shuttles electrons from NAD(P)H:plastoquinone, via FMN and iron-sulfur (Fe-S) centers, to quinones in the photosynthetic chain and possibly in a chloroplast respiratory chain. The immediate electron acceptor for the enzyme in this species is believed to be plastoquinone. Couples the redox reaction to proton translocation, and thus conserves the redox energy in a proton gradient. The protein is NAD(P)H-quinone oxidoreductase subunit 6, chloroplastic (ndhG) of Marchantia polymorpha (Common liverwort).